A 720-amino-acid chain; its full sequence is MSKKRIYEYAKELNLKSKEIIDELKSMNVEVSNHMQALEEEQIKALDKKFKASQAKDTNKQNTQNNHQKSNNKQNSNDKEKQQSKNNSKPTKKKEQNNKGKQQNKNNKTNKNQKNNKNKKNNKNNKPQNEVEETKEMPSKITYQEGITVGELAEKLNVESAGIIKKLFLLGIMANINQSLDEETLELIADDYGVEIEKEVVVDEEDLSIYFDDETDDSDAIERPAVVTIMGHVDHGKTTLLDSIRNTKVTEGEAGGITQHIGAYQIENSGKKITFLDTPGHAAFTTMRARGAQVTDITILVVAADDGVMPQTIEAINHAKEAEVPTIVAVNKIDKPTANPDRVMQELTEYGLIPEDWGGDTIFVPLSALSGDGIDDLLEMIGLVAEVQELKANPNKQAVGTVIEAELDKSRGPAASLLVQNGTLNVGDAIVVGNTYGRIRAMVNDLGKRIKSAGPSTPVEITGINDVPLAGDRFVVFGDEKQARRIGEARHEASVIQQRQESKNVSLDNLFEQMKQGEMKDLNVIIKGDVQGSVEALAASLMKIDVEGVNVRIIHTAVGAINESDVTLANASNGIIIGFNVRPDAGAKRAAEAENVDMRLHRVIYNVIEEIESAMKGLLDPEFEEQVIGQAEVRQTFKVSKVGTIAGSYVTEGKITRNAGVRVIRDGIVLFEGELDTLKRFKDDAKEVAQGYECGITIEKYNDLKEGDIIEAFEMVEIQR.

Positions lysine 48 to proline 138 are disordered. 2 stretches are compositionally biased toward low complexity: residues lysine 60 to asparagine 75 and lysine 99 to glutamine 113. The segment covering lysine 114–lysine 123 has biased composition (basic residues). Residues glutamate 222–lysine 391 enclose the tr-type G domain. The G1 stretch occupies residues glycine 231 to threonine 238. Glycine 231–threonine 238 contributes to the GTP binding site. A G2 region spans residues glycine 256–histidine 260. Residues aspartate 277–glycine 280 are G3. GTP-binding positions include aspartate 277 to histidine 281 and asparagine 331 to aspartate 334. The interval asparagine 331 to aspartate 334 is G4. Positions serine 367–leucine 369 are G5.

The protein belongs to the TRAFAC class translation factor GTPase superfamily. Classic translation factor GTPase family. IF-2 subfamily.

The protein localises to the cytoplasm. Its function is as follows. One of the essential components for the initiation of protein synthesis. Protects formylmethionyl-tRNA from spontaneous hydrolysis and promotes its binding to the 30S ribosomal subunits. Also involved in the hydrolysis of GTP during the formation of the 70S ribosomal complex. This chain is Translation initiation factor IF-2, found in Staphylococcus epidermidis (strain ATCC 35984 / DSM 28319 / BCRC 17069 / CCUG 31568 / BM 3577 / RP62A).